We begin with the raw amino-acid sequence, 632 residues long: Phosphatidylinositol-3,5-bisphosphate 3-phosphatase MTMR8 (632 aa).

A Myotubularin phosphatase domain is found at 126 to 500; it reads GWELISVVND…LHFKFWCGMY (375 aa). Asn250, Asn275, and Ile276 together coordinate a 1,2-diacyl-sn-glycero-3-phospho-(1D-myo-inositol-3,5-bisphosphate). The a 1,2-diacyl-sn-glycero-3-phospho-(1D-myo-inositol-3-phosphate) site is built by Asn250, Asn275, and Ile276. Cys338 serves as the catalytic Phosphocysteine intermediate. Residues Ser339, Asp340, Gly341, Trp342, Asp343, Arg344, Lys380, and Arg384 each contribute to the a 1,2-diacyl-sn-glycero-3-phospho-(1D-myo-inositol-3,5-bisphosphate) site. A 1,2-diacyl-sn-glycero-3-phospho-(1D-myo-inositol-3-phosphate) contacts are provided by Ser339, Asp340, Gly341, Trp342, Asp343, and Arg344. Ser339 and Asp340 together coordinate phosphate. Positions 342, 343, and 344 each coordinate phosphate. Arg384 provides a ligand contact to a 1,2-diacyl-sn-glycero-3-phospho-(1D-myo-inositol-3-phosphate). The interval 545 to 632 is disordered; the sequence is LPDPAGPINT…HSKEEVQESS (88 aa). The span at 602-632 shows a compositional bias: basic and acidic residues; the sequence is EPAANEHDLSSKDKPVFVETEHSKEEVQESS.

It belongs to the protein-tyrosine phosphatase family. Non-receptor class myotubularin subfamily. In terms of assembly, homodimer.

The protein resides in the nucleus envelope. The catalysed reaction is a 1,2-diacyl-sn-glycero-3-phospho-(1D-myo-inositol-3,5-bisphosphate) + H2O = a 1,2-diacyl-sn-glycero-3-phospho-(1D-myo-inositol-5-phosphate) + phosphate. It catalyses the reaction a 1,2-diacyl-sn-glycero-3-phospho-(1D-myo-inositol-3-phosphate) + H2O = a 1,2-diacyl-sn-glycero-3-phospho-(1D-myo-inositol) + phosphate. The enzyme catalyses 1,2-dioctanoyl-sn-glycero-3-phospho-(1D-myo-inositol-3,5-bisphosphate) + H2O = 1,2-dioctanoyl-sn-glycero-3-phospho-(1D-myo-inositol-5-phosphate) + phosphate. Its function is as follows. Lipid phosphatase that specifically dephosphorylates the D-3 position of phosphatidylinositol 3-phosphate and phosphatidylinositol 3,5-bisphosphate, generating phosphatidylinositol and phosphatidylinositol 5-phosphate. The polypeptide is Phosphatidylinositol-3,5-bisphosphate 3-phosphatase MTMR8 (mtmr8) (Danio rerio (Zebrafish)).